Consider the following 139-residue polypeptide: Chemical-damaging agent resistance protein B (139 aa).

This sequence belongs to the CAPAB/TerDEXZ family.

In terms of biological role, not known; could confer methyl methane sulfonate (MMS), mitomycin C (MC), and UV resistance. This Clostridium acetobutylicum protein is Chemical-damaging agent resistance protein B.